Reading from the N-terminus, the 553-residue chain is Serine protease 53 (553 aa).

A signal peptide spans 1–23; sequence MKWCWGPVLLIAGATVLMEGLQA. Peptidase S1 domains lie at 24–273 and 294–526; these read AQRA…ARVQ and VACG…SLDW. The disordered stretch occupies residues 27–46; sequence ACGQRGPGPPKPQEGNTVPG. Residues cysteine 62 and cysteine 78 are joined by a disulfide bond. Active-site charge relay system residues include histidine 77 and aspartate 128. Disulfide bonds link cysteine 158–cysteine 230, cysteine 187–cysteine 209, cysteine 220–cysteine 249, and cysteine 326–cysteine 342. Active-site charge relay system residues include serine 224, histidine 341, and aspartate 382. 2 cysteine pairs are disulfide-bonded: cysteine 444–cysteine 464 and cysteine 474–cysteine 502. The active-site Charge relay system is serine 478.

It belongs to the peptidase S1 family. Predominantly detected in testis, liver, heart and ovary, as well as in several tumor cell lines.

The protein resides in the secreted. In vitro can degrade the fibrinogen alpha chain of as well as pro-urokinase-type plasminogen activator. The polypeptide is Serine protease 53 (PRSS53) (Homo sapiens (Human)).